Here is a 173-residue protein sequence, read N- to C-terminus: Shikimate kinase 1 (173 aa).

ATP is bound at residue 14–19 (GAGKST). Ser18 contributes to the Mg(2+) binding site. Substrate-binding residues include Asp36, Arg60, and Gly82. Arg120 serves as a coordination point for ATP. Residue Arg140 participates in substrate binding. Residue Gln157 participates in ATP binding.

This sequence belongs to the shikimate kinase family. As to quaternary structure, monomer. It depends on Mg(2+) as a cofactor.

The protein localises to the cytoplasm. It carries out the reaction shikimate + ATP = 3-phosphoshikimate + ADP + H(+). Its pathway is metabolic intermediate biosynthesis; chorismate biosynthesis; chorismate from D-erythrose 4-phosphate and phosphoenolpyruvate: step 5/7. Catalyzes the specific phosphorylation of the 3-hydroxyl group of shikimic acid using ATP as a cosubstrate. This chain is Shikimate kinase 1, found in Shigella boydii serotype 18 (strain CDC 3083-94 / BS512).